A 446-amino-acid chain; its full sequence is Putative F-box protein At1g32660 (446 aa).

Basic and acidic residues-rich tracts occupy residues 1 to 12 and 43 to 57; these read MKRKDDDQEDRS and NKLE…NPSK. A disordered region spans residues 1 to 57; it reads MKRKDDDQEDRSCSSASKLDPIPLDLKMATVPTKSHMKKSHQNKLEEDEKEDTNPSK. The 51-residue stretch at 57-107 folds into the F-box domain; it reads KLELDSLPLDLKMAILTRIPAKSLMKLRCVSKMWSSIIRSRGFIDSYYAIS.

In Arabidopsis thaliana (Mouse-ear cress), this protein is Putative F-box protein At1g32660.